We begin with the raw amino-acid sequence, 609 residues long: Pogo transposable element with KRAB domain (609 aa).

Disordered stretches follow at residues 1–28 and 100–127; these read MEST…ELED and EGEE…SDVK. A coiled-coil region spans residues 8-28; the sequence is LNLSLKEEEEEEEIQSRELED. Lys-13 participates in a covalent cross-link: Glycyl lysine isopeptide (Lys-Gly) (interchain with G-Cter in SUMO2). The KRAB domain maps to 47 to 118; it reads ALFDEVAIYF…DEWQLQGGTS (72 aa). Positions 108-119 are enriched in polar residues; sequence SDEWQLQGGTSA. One can recognise an HTH CENPB-type domain in the interval 250–323; sequence AFRGPKNGRF…MRRYDLSLRH (74 aa). The region spanning 353-567 is the DDE-1 domain; the sequence is HDYEVAQMGN…ISSESIVQGF (215 aa). A Glycyl lysine isopeptide (Lys-Gly) (interchain with G-Cter in SUMO2) cross-link involves residue Lys-384. The segment at 588–609 is disordered; it reads SELPGGGEPPKDCDTESMAESN.

The protein localises to the nucleus. The polypeptide is Pogo transposable element with KRAB domain (POGK) (Homo sapiens (Human)).